The chain runs to 317 residues: Inositol oxygenase 2 (317 aa).

Substrate contacts are provided by residues arginine 57 and 115-117 (DES). Histidine 128, histidine 153, and aspartate 154 together coordinate Fe cation. Substrate is bound by residues lysine 157 and 174–175 (GD). Fe cation is bound by residues histidine 226, histidine 252, and aspartate 285. 252–253 (HS) serves as a coordination point for substrate.

This sequence belongs to the myo-inositol oxygenase family. Fe cation serves as cofactor. As to expression, expressed mainly in roots, stems, flowers and siliques. Low expression in leaves.

It is found in the cytoplasm. It carries out the reaction myo-inositol + O2 = D-glucuronate + H2O + H(+). The protein operates within polyol metabolism; myo-inositol degradation into D-glucuronate; D-glucuronate from myo-inositol: step 1/1. Its function is as follows. Involved in the biosynthesis of UDP-glucuronic acid (UDP-GlcA), providing nucleotide sugars for cell-wall polymers. May be also involved in plant ascorbate biosynthesis. The chain is Inositol oxygenase 2 (MIOX2) from Arabidopsis thaliana (Mouse-ear cress).